The primary structure comprises 411 residues: Cytosolic Fe-S cluster assembly factor narfl (411 aa).

Residues Cys11, Cys124, Cys180, Cys329, and Cys333 each contribute to the [4Fe-4S] cluster site.

It belongs to the NARF family. In terms of assembly, component of the CIA complex.

Functionally, component of the cytosolic iron-sulfur protein assembly (CIA) complex, a multiprotein complex that mediates the incorporation of iron-sulfur cluster into extramitochondrial Fe/S proteins. This is Cytosolic Fe-S cluster assembly factor narfl (narfl) from Danio rerio (Zebrafish).